The sequence spans 146 residues: Hemoglobin subunit beta (146 aa).

An N-acetylvaline modification is found at valine 1. The Globin domain occupies 2–146 (HLTGEEKSTV…VATALAHKYH (145 aa)). The residue at position 44 (serine 44) is a Phosphoserine. Position 59 is an N6-acetyllysine (lysine 59). Histidine 63 is a binding site for heme b. At lysine 82 the chain carries N6-acetyllysine. Histidine 92 contacts heme b. Residue cysteine 93 is modified to S-nitrosocysteine. Lysine 144 is subject to N6-acetyllysine.

It belongs to the globin family. Heterotetramer of two alpha chains and two beta chains. As to expression, red blood cells.

Involved in oxygen transport from the lung to the various peripheral tissues. In Macrotus californicus (Californian leaf-nosed bat), this protein is Hemoglobin subunit beta (HBB).